Consider the following 105-residue polypeptide: Large ribosomal subunit protein uL24 (105 aa).

It belongs to the universal ribosomal protein uL24 family. As to quaternary structure, part of the 50S ribosomal subunit.

Functionally, one of two assembly initiator proteins, it binds directly to the 5'-end of the 23S rRNA, where it nucleates assembly of the 50S subunit. Its function is as follows. One of the proteins that surrounds the polypeptide exit tunnel on the outside of the subunit. The chain is Large ribosomal subunit protein uL24 from Vibrio campbellii (strain ATCC BAA-1116).